We begin with the raw amino-acid sequence, 67 residues long: MPQLDTSTWFTTILATITTLFILFQLKISKYIYPSSPELKSMKSLKHNTPWETKWTKIYSPLSLPLQ.

Residues 8 to 24 form a helical membrane-spanning segment; that stretch reads TWFTTILATITTLFILF. The residue at position 54 (K54) is an N6-acetyllysine; alternate. K54 is modified (N6-succinyllysine; alternate). At K57 the chain carries N6-acetyllysine.

This sequence belongs to the ATPase protein 8 family. In terms of assembly, component of the ATP synthase complex composed at least of ATP5F1A/subunit alpha, ATP5F1B/subunit beta, ATP5MC1/subunit c (homooctomer), MT-ATP6/subunit a, MT-ATP8/subunit 8, ATP5ME/subunit e, ATP5MF/subunit f, ATP5MG/subunit g, ATP5MK/subunit k, ATP5MJ/subunit j, ATP5F1C/subunit gamma, ATP5F1D/subunit delta, ATP5F1E/subunit epsilon, ATP5PF/subunit F6, ATP5PB/subunit b, ATP5PD/subunit d, ATP5PO/subunit OSCP. ATP synthase complex consists of a soluble F(1) head domain (subunits alpha(3) and beta(3)) - the catalytic core - and a membrane F(0) domain - the membrane proton channel (subunits c, a, 8, e, f, g, k and j). These two domains are linked by a central stalk (subunits gamma, delta, and epsilon) rotating inside the F1 region and a stationary peripheral stalk (subunits F6, b, d, and OSCP). Interacts with PRICKLE3.

It localises to the mitochondrion membrane. Functionally, subunit 8, of the mitochondrial membrane ATP synthase complex (F(1)F(0) ATP synthase or Complex V) that produces ATP from ADP in the presence of a proton gradient across the membrane which is generated by electron transport complexes of the respiratory chain. ATP synthase complex consist of a soluble F(1) head domain - the catalytic core - and a membrane F(1) domain - the membrane proton channel. These two domains are linked by a central stalk rotating inside the F(1) region and a stationary peripheral stalk. During catalysis, ATP synthesis in the catalytic domain of F(1) is coupled via a rotary mechanism of the central stalk subunits to proton translocation. In vivo, can only synthesize ATP although its ATP hydrolase activity can be activated artificially in vitro. Part of the complex F(0) domain. In Talpa europaea (European mole), this protein is ATP synthase F(0) complex subunit 8.